Reading from the N-terminus, the 482-residue chain is Glucose starvation modulator protein 1 (482 aa).

Positions 20–48 (CVFCHEKHLQCDVGRPCQNCEKRNIGESC) form a DNA-binding region, zn(2)-C6 fungal-type. Residues 350–422 (LLEYENMSKM…KLFNEYLAFS (73 aa)) enclose the PAS domain.

The protein belongs to the ERT1/acuK family.

The protein resides in the nucleus. Its function is as follows. Transcription factor which regulates nonfermentable carbon utilization. This Eremothecium gossypii (strain ATCC 10895 / CBS 109.51 / FGSC 9923 / NRRL Y-1056) (Yeast) protein is Glucose starvation modulator protein 1 (GSM1).